The following is a 91-amino-acid chain: Early E3B 10.4 kDa protein (91 aa).

Residues 1 to 21 (MVTVLLIFLCLPVIFSSSTFA) form the signal peptide. Over 22-33 (AVSDLDPECLAP) the chain is Lumenal. A helical membrane pass occupies residues 34–56 (FAVYLIFTFVTATCVCSIITLLI). Over 57-91 (TSLQFFDYYYVRIVYRRHHPRYQNPQIAALLQLQP) the chain is Cytoplasmic.

The protein belongs to the adenoviridae E3B family.

The protein localises to the host endoplasmic reticulum membrane. Its function is as follows. Down-regulates the EGF receptor. This Homo sapiens (Human) protein is Early E3B 10.4 kDa protein.